The chain runs to 911 residues: Hexon protein (911 aa).

N-acetylalanine; by host is present on A2. Y899 carries the phosphotyrosine; by host modification.

The protein belongs to the adenoviridae hexon protein family. As to quaternary structure, homotrimer. Interacts with the capsid vertex protein; this interaction binds the peripentonal hexons to the neighboring penton base. Interacts with the hexon-linking protein; this interaction tethers the hexons surrounding the penton to those situated in the central plate of the facet. Interacts with the hexon-interlacing protein; this interaction lashes the hexons together. Interacts with host dyneins DYNC1LI1 and DYNC1I2; this interaction might be involved in intracellular microtubule-dependent transport of incoming viral capsid. Interacts with the shutoff protein; this interaction allows folding and formation of hexons trimers. Interacts with pre-protein VI; this interaction probably allows nuclear import of hexon trimers and possibly pre-capsid assembly.

The protein localises to the virion. It is found in the host nucleus. Functionally, major capsid protein that self-associates to form 240 hexon trimers, each in the shape of a hexagon, building most of the pseudo T=25 capsid. Assembled into trimeric units with the help of the chaperone shutoff protein. Transported by pre-protein VI to the nucleus where it associates with other structural proteins to form an empty capsid. Might be involved, through its interaction with host dyneins, in the intracellular microtubule-dependent transport of incoming viral capsid to the nucleus. This chain is Hexon protein, found in Bos taurus (Bovine).